The following is a 166-amino-acid chain: MSEAIIAKKAEQVELIAEKMKAAVSIVVVDSRGLTVDQDTVLRRSLRESGVEFKVIKNSILTRAAEKAGLDELKDIFVGPSAVAFSNEDVIAPAKVINDFAKTAEALEIKGGAIEGVVSSKEEIQALAALPNREGMLSMLLSVLQAPVRNVAYAVKAVAESKEGAA.

This sequence belongs to the universal ribosomal protein uL10 family. Part of the ribosomal stalk of the 50S ribosomal subunit. The N-terminus interacts with L11 and the large rRNA to form the base of the stalk. The C-terminus forms an elongated spine to which L12 dimers bind in a sequential fashion forming a multimeric L10(L12)X complex.

Functionally, forms part of the ribosomal stalk, playing a central role in the interaction of the ribosome with GTP-bound translation factors. The chain is Large ribosomal subunit protein uL10 from Streptococcus equi subsp. zooepidemicus (strain MGCS10565).